The following is a 244-amino-acid chain: Heat shock transcription factor (244 aa).

The DNA-binding element occupies 13–108 (IPKFIMKLYK…LLGFDDSLRM (96 aa)). An involved in trimerization region spans residues 123–168 (DGSLKEIVEYLYVQNQELYTELSVCKERIERQERALNGLIEILSRV). The interval 204 to 244 (EGCEPASPPLQDKGIPELSFKPGGIPHADSDTKDDNYDPFF) is disordered. Basic and acidic residues predominate over residues 231 to 244 (ADSDTKDDNYDPFF).

It belongs to the HSF family. In terms of assembly, homotrimer. Homotrimerization increases the affinity of HSF1 to DNA.

The protein localises to the nucleus. DNA-binding transcription factor that specifically binds heat shock promoter elements (HSE) and activates transcription. The polypeptide is Heat shock transcription factor (Encephalitozoon cuniculi (strain GB-M1) (Microsporidian parasite)).